A 365-amino-acid chain; its full sequence is tRNA 2-selenouridine synthase (365 aa).

The region spanning 15-138 (FVNDHPIMDA…MRQFLIETID (124 aa)) is the Rhodanese domain. C98 functions as the S-selanylcysteine intermediate in the catalytic mechanism.

The protein belongs to the SelU family. As to quaternary structure, monomer.

The enzyme catalyses 5-methylaminomethyl-2-thiouridine(34) in tRNA + selenophosphate + (2E)-geranyl diphosphate + H2O + H(+) = 5-methylaminomethyl-2-selenouridine(34) in tRNA + (2E)-thiogeraniol + phosphate + diphosphate. It carries out the reaction 5-methylaminomethyl-2-thiouridine(34) in tRNA + (2E)-geranyl diphosphate = 5-methylaminomethyl-S-(2E)-geranyl-thiouridine(34) in tRNA + diphosphate. The catalysed reaction is 5-methylaminomethyl-S-(2E)-geranyl-thiouridine(34) in tRNA + selenophosphate + H(+) = 5-methylaminomethyl-2-(Se-phospho)selenouridine(34) in tRNA + (2E)-thiogeraniol. It catalyses the reaction 5-methylaminomethyl-2-(Se-phospho)selenouridine(34) in tRNA + H2O = 5-methylaminomethyl-2-selenouridine(34) in tRNA + phosphate. Functionally, involved in the post-transcriptional modification of the uridine at the wobble position (U34) of tRNA(Lys), tRNA(Glu) and tRNA(Gln). Catalyzes the conversion of 2-thiouridine (S2U-RNA) to 2-selenouridine (Se2U-RNA). Acts in a two-step process involving geranylation of 2-thiouridine (S2U) to S-geranyl-2-thiouridine (geS2U) and subsequent selenation of the latter derivative to 2-selenouridine (Se2U) in the tRNA chain. This is tRNA 2-selenouridine synthase from Shewanella halifaxensis (strain HAW-EB4).